Reading from the N-terminus, the 156-residue chain is NAD(P)H-quinone oxidoreductase subunit N (156 aa).

Belongs to the complex I NdhN subunit family. As to quaternary structure, NDH-1 can be composed of about 15 different subunits; different subcomplexes with different compositions have been identified which probably have different functions.

It localises to the cellular thylakoid membrane. It catalyses the reaction a plastoquinone + NADH + (n+1) H(+)(in) = a plastoquinol + NAD(+) + n H(+)(out). It carries out the reaction a plastoquinone + NADPH + (n+1) H(+)(in) = a plastoquinol + NADP(+) + n H(+)(out). Its function is as follows. NDH-1 shuttles electrons from an unknown electron donor, via FMN and iron-sulfur (Fe-S) centers, to quinones in the respiratory and/or the photosynthetic chain. The immediate electron acceptor for the enzyme in this species is believed to be plastoquinone. Couples the redox reaction to proton translocation, and thus conserves the redox energy in a proton gradient. Cyanobacterial NDH-1 also plays a role in inorganic carbon-concentration. This chain is NAD(P)H-quinone oxidoreductase subunit N, found in Prochlorococcus marinus subsp. pastoris (strain CCMP1986 / NIES-2087 / MED4).